The following is a 584-amino-acid chain: 2-isopropylmalate synthase (584 aa).

The Pyruvate carboxyltransferase domain maps to 40-314; it reads PRWCAVDLRD…DPQIDFSDIE (275 aa). Mg(2+) contacts are provided by Asp-49, His-253, His-255, and Asn-289. A regulatory domain region spans residues 456-584; that stretch reads SRDGSGSTWG…VRDAQEAAQD (129 aa).

This sequence belongs to the alpha-IPM synthase/homocitrate synthase family. LeuA type 2 subfamily. As to quaternary structure, homodimer. The cofactor is Mg(2+).

The protein resides in the cytoplasm. The catalysed reaction is 3-methyl-2-oxobutanoate + acetyl-CoA + H2O = (2S)-2-isopropylmalate + CoA + H(+). Its pathway is amino-acid biosynthesis; L-leucine biosynthesis; L-leucine from 3-methyl-2-oxobutanoate: step 1/4. In terms of biological role, catalyzes the condensation of the acetyl group of acetyl-CoA with 3-methyl-2-oxobutanoate (2-ketoisovalerate) to form 3-carboxy-3-hydroxy-4-methylpentanoate (2-isopropylmalate). In Kocuria rhizophila (strain ATCC 9341 / DSM 348 / NBRC 103217 / DC2201), this protein is 2-isopropylmalate synthase.